Here is a 30-residue protein sequence, read N- to C-terminus: M-poneritoxin-Ng3a (30 aa).

As to expression, expressed by the venom gland.

The protein resides in the secreted. Functionally, shows a broad spectrum of activity against both Gram-positive and Gram-negative bacteria. Also has antimicrobial activity against S.cerevisiae. Has insecticidal and non-hemolytic activity. The protein is M-poneritoxin-Ng3a of Neoponera goeldii (Ponerine ant).